We begin with the raw amino-acid sequence, 127 residues long: Large ribosomal subunit protein bL19 (127 aa).

The protein belongs to the bacterial ribosomal protein bL19 family.

Its function is as follows. This protein is located at the 30S-50S ribosomal subunit interface and may play a role in the structure and function of the aminoacyl-tRNA binding site. The polypeptide is Large ribosomal subunit protein bL19 (Myxococcus xanthus (strain DK1622)).